The primary structure comprises 75 residues: Serine rich endogenous peptide 20 (75 aa).

The first 25 residues, 1–25, serve as a signal peptide directing secretion; the sequence is MYKLTLCILTLSFLLLSGLSNTVLA. The short motif at 52 to 66 is the SCOOP motif element; that stretch reads KIGASGSNSGRAPSC. The tract at residues 54–75 is disordered; sequence GASGSNSGRAPSCNNSCKPNRP. The SxS motif essential for MIK2 binding motif lies at 56 to 58; it reads SGS. Over residues 56-75 the composition is skewed to polar residues; it reads SGSNSGRAPSCNNSCKPNRP.

The protein belongs to the serine rich endogenous peptide (SCOOP) phytocytokine family. As to quaternary structure, interacts with MIK2 (via extracellular leucine-rich repeat domain); this interaction triggers the formation of complex between MIK2 and the BAK1/SERK3 and SERK4 coreceptors, and subsequent BAK1 activation by phosphorylation. In terms of tissue distribution, mostly expressed in roots.

The protein localises to the cell membrane. It localises to the secreted. The protein resides in the extracellular space. Its subcellular location is the apoplast. Functionally, brassicaceae-specific phytocytokine (plant endogenous peptide released into the apoplast) perceived by MIK2 in a BAK1/SERK3 and SERK4 coreceptors-dependent manner, that modulates various physiological and antimicrobial processes including growth prevention and reactive oxygen species (ROS) response regulation. Inhibits root growth. This chain is Serine rich endogenous peptide 20, found in Arabidopsis thaliana (Mouse-ear cress).